A 108-amino-acid polypeptide reads, in one-letter code: Small ribosomal subunit protein uS10 (108 aa).

The protein belongs to the universal ribosomal protein uS10 family. In terms of assembly, part of the 30S ribosomal subunit.

Functionally, involved in the binding of tRNA to the ribosomes. The polypeptide is Small ribosomal subunit protein uS10 (Ehrlichia canis (strain Jake)).